The primary structure comprises 467 residues: Glutamate--tRNA ligase (467 aa).

The short motif at 9-19 is the 'HIGH' region element; sequence PSPTGFLHIGG. The 'KMSKS' region signature appears at 250–254; that stretch reads KLSKR. Residue Lys253 coordinates ATP.

It belongs to the class-I aminoacyl-tRNA synthetase family. Glutamate--tRNA ligase type 1 subfamily. As to quaternary structure, monomer.

It localises to the cytoplasm. The catalysed reaction is tRNA(Glu) + L-glutamate + ATP = L-glutamyl-tRNA(Glu) + AMP + diphosphate. Catalyzes the attachment of glutamate to tRNA(Glu) in a two-step reaction: glutamate is first activated by ATP to form Glu-AMP and then transferred to the acceptor end of tRNA(Glu). The chain is Glutamate--tRNA ligase from Mesomycoplasma hyopneumoniae (strain 7448) (Mycoplasma hyopneumoniae).